Reading from the N-terminus, the 122-residue chain is Large ribosomal subunit protein uL14 (122 aa).

This sequence belongs to the universal ribosomal protein uL14 family. Part of the 50S ribosomal subunit. Forms a cluster with proteins L3 and L19. In the 70S ribosome, L14 and L19 interact and together make contacts with the 16S rRNA in bridges B5 and B8.

Binds to 23S rRNA. Forms part of two intersubunit bridges in the 70S ribosome. This chain is Large ribosomal subunit protein uL14, found in Lactobacillus acidophilus (strain ATCC 700396 / NCK56 / N2 / NCFM).